The primary structure comprises 88 residues: MASVVPLKDRRLLEVKLGELPSWILMRDFTPSGIAGAFQRGYYRYYNKYVNVKKGSVAGLSMVLAAYVVFNYCRSYKELKHERLRKYH.

Ala2 is modified (N-acetylalanine). Residue Ser3 is modified to Phosphoserine. Position 16 is an N6-acetyllysine (Lys16). The chain crosses the membrane as a helical span at residues 62-79 (MVLAAYVVFNYCRSYKEL).

It belongs to the ATPase F chain family. As to quaternary structure, component of the ATP synthase complex composed at least of ATP5F1A/subunit alpha, ATP5F1B/subunit beta, ATP5MC1/subunit c (homooctomer), MT-ATP6/subunit a, MT-ATP8/subunit 8, ATP5ME/subunit e, ATP5MF/subunit f, ATP5MG/subunit g, ATP5MK/subunit k, ATP5MJ/subunit j, ATP5F1C/subunit gamma, ATP5F1D/subunit delta, ATP5F1E/subunit epsilon, ATP5PF/subunit F6, ATP5PB/subunit b, ATP5PD/subunit d, ATP5PO/subunit OSCP. ATP synthase complex consists of a soluble F(1) head domain (subunits alpha(3) and beta(3)) - the catalytic core - and a membrane F(0) domain - the membrane proton channel (subunits c, a, 8, e, f, g, k and j). These two domains are linked by a central stalk (subunits gamma, delta, and epsilon) rotating inside the F1 region and a stationary peripheral stalk (subunits F6, b, d, and OSCP).

The protein resides in the mitochondrion. It is found in the mitochondrion inner membrane. Its function is as follows. Subunit f, of the mitochondrial membrane ATP synthase complex (F(1)F(0) ATP synthase or Complex V) that produces ATP from ADP in the presence of a proton gradient across the membrane which is generated by electron transport complexes of the respiratory chain. ATP synthase complex consist of a soluble F(1) head domain - the catalytic core - and a membrane F(1) domain - the membrane proton channel. These two domains are linked by a central stalk rotating inside the F(1) region and a stationary peripheral stalk. During catalysis, ATP synthesis in the catalytic domain of F(1) is coupled via a rotary mechanism of the central stalk subunits to proton translocation. In vivo, can only synthesize ATP although its ATP hydrolase activity can be activated artificially in vitro. Part of the complex F(0) domain. The protein is ATP synthase F(0) complex subunit f, mitochondrial of Sus scrofa (Pig).